The sequence spans 198 residues: Recombination protein RecR (198 aa).

Residues 57-72 form a C4-type zinc finger; sequence CEKCNTFTEAQICEVC. In terms of domain architecture, Toprim spans 80–175; sequence TLLCVVETPA…AVTRLARGVP (96 aa).

It belongs to the RecR family.

May play a role in DNA repair. It seems to be involved in an RecBC-independent recombinational process of DNA repair. It may act with RecF and RecO. This is Recombination protein RecR from Burkholderia cenocepacia (strain HI2424).